Here is a 142-residue protein sequence, read N- to C-terminus: Coactosin-like protein (142 aa).

Ala2 bears the N-acetylalanine mark. The region spanning 2-130 (ATKIDKEACR…EEDFIRSELK (129 aa)) is the ADF-H domain. Ser23 is modified (phosphoserine). Residues 66–75 (TGDAMSKRSK) are flexible and important for F-actin binding. Lys102 is modified (N6-acetyllysine). Residue Ser141 is modified to Phosphoserine.

Belongs to the actin-binding proteins ADF family. Coactosin subfamily. In terms of assembly, interacts with 5-lipoxygenase (ALOX5/5LO) in a calcium-independent manner. Binds to F-actin with a stoichiometry of 1:2.

The protein resides in the cytoplasm. It localises to the cytoskeleton. Its subcellular location is the nucleus. Binds to F-actin in a calcium-independent manner. Has no direct effect on actin depolymerization. Acts as a chaperone for ALOX5 (5LO), influencing both its stability and activity in leukotrienes synthesis. This is Coactosin-like protein from Rattus norvegicus (Rat).